A 325-amino-acid polypeptide reads, in one-letter code: Tetraacyldisaccharide 4'-kinase (325 aa).

Residue 55 to 62 coordinates ATP; sequence TAGGNGKT.

It belongs to the LpxK family.

The enzyme catalyses a lipid A disaccharide + ATP = a lipid IVA + ADP + H(+). The protein operates within glycolipid biosynthesis; lipid IV(A) biosynthesis; lipid IV(A) from (3R)-3-hydroxytetradecanoyl-[acyl-carrier-protein] and UDP-N-acetyl-alpha-D-glucosamine: step 6/6. In terms of biological role, transfers the gamma-phosphate of ATP to the 4'-position of a tetraacyldisaccharide 1-phosphate intermediate (termed DS-1-P) to form tetraacyldisaccharide 1,4'-bis-phosphate (lipid IVA). This Salmonella agona (strain SL483) protein is Tetraacyldisaccharide 4'-kinase.